A 158-amino-acid chain; its full sequence is Dihydroneopterin triphosphate diphosphatase (158 aa).

Substrate contacts are provided by Lys14, Arg36, and Thr47. Residues 14–153 (KNNQSVLVVI…NNAEAIKKYL (140 aa)) form the Nudix hydrolase domain. The Nudix box signature appears at 48–69 (GTIESDETPKKTAIRELWEEVR). Glu63 and Glu67 together coordinate Mg(2+). 88–91 (FEIF) is a substrate binding site. Glu124 serves as a coordination point for Mg(2+). Residue Ser142 participates in substrate binding.

Belongs to the Nudix hydrolase family. Mg(2+) is required as a cofactor.

The catalysed reaction is 7,8-dihydroneopterin 3'-triphosphate + H2O = 7,8-dihydroneopterin 3'-phosphate + diphosphate + H(+). Catalyzes the hydrolysis of dihydroneopterin triphosphate to dihydroneopterin monophosphate and pyrophosphate. Required for efficient folate biosynthesis. Can also hydrolyze nucleoside triphosphates with a preference for dATP. This is Dihydroneopterin triphosphate diphosphatase (nudB) from Haemophilus influenzae (strain ATCC 51907 / DSM 11121 / KW20 / Rd).